A 115-amino-acid polypeptide reads, in one-letter code: Large ribosomal subunit protein uL24 (115 aa).

Belongs to the universal ribosomal protein uL24 family. As to quaternary structure, part of the 50S ribosomal subunit.

Its function is as follows. One of two assembly initiator proteins, it binds directly to the 5'-end of the 23S rRNA, where it nucleates assembly of the 50S subunit. Functionally, one of the proteins that surrounds the polypeptide exit tunnel on the outside of the subunit. The polypeptide is Large ribosomal subunit protein uL24 (Aster yellows witches'-broom phytoplasma (strain AYWB)).